The following is a 151-amino-acid chain: Urease accessory protein UreE (151 aa).

Belongs to the UreE family.

It localises to the cytoplasm. In terms of biological role, involved in urease metallocenter assembly. Binds nickel. Probably functions as a nickel donor during metallocenter assembly. This Lachnoclostridium phytofermentans (strain ATCC 700394 / DSM 18823 / ISDg) (Clostridium phytofermentans) protein is Urease accessory protein UreE.